The primary structure comprises 491 residues: UDP-glycosyltransferase 73C1 (491 aa).

Residues S292, 352–354 (SPQ), 369–377 (HCGWNSTLE), and 391–394 (FGDQ) each bind UDP-alpha-D-glucose.

This sequence belongs to the UDP-glycosyltransferase family.

Involved in the O-glucosylation of trans-zeatin and dihydrozeatin. Also active in vitro on cis-zeatin, dihydrozeatin-9-N-Glc, and olomoucine. Can detoxify the explosive 2,4,6-trinitrotoluene in plant by forming O- or C-glucose conjugates. The protein is UDP-glycosyltransferase 73C1 (UGT73C1) of Arabidopsis thaliana (Mouse-ear cress).